The chain runs to 145 residues: Ribonuclease VapC24 (145 aa).

The region spanning 4-123 is the PINc domain; that stretch reads IDTNILLYAQ…RHHGVDEFAT (120 aa). 2 residues coordinate Mg(2+): Asp-5 and Asp-106.

It belongs to the PINc/VapC protein family. It depends on Mg(2+) as a cofactor.

In terms of biological role, toxic component of a type II toxin-antitoxin (TA) system. An RNase. Its cognate antitoxin is VapB24. The polypeptide is Ribonuclease VapC24 (Mycobacterium tuberculosis (strain CDC 1551 / Oshkosh)).